We begin with the raw amino-acid sequence, 432 residues long: Amino-acid acetyltransferase (432 aa).

The N-acetyltransferase domain maps to 286–425; that stretch reads EQLREAGIED…ASLYNFQRNS (140 aa).

This sequence belongs to the acetyltransferase family. ArgA subfamily.

It localises to the cytoplasm. The catalysed reaction is L-glutamate + acetyl-CoA = N-acetyl-L-glutamate + CoA + H(+). It functions in the pathway amino-acid biosynthesis; L-arginine biosynthesis; N(2)-acetyl-L-ornithine from L-glutamate: step 1/4. The protein is Amino-acid acetyltransferase of Pseudomonas aeruginosa (strain LESB58).